The following is a 375-amino-acid chain: MALAAELIRAPSVTPHADDALELVAKRLEAAGYRVERLTFETGGVPIPNLYARIGTDGPNLCFAGHVDVVPEGDATQWHHAPFAGTVEDGVLHGRGAVDMKGAVAAFLAAALAFGRPQRGSLSFLITGDEEGPALDGTVKVVEWLKARGETIDHCVLGEPTNPDALGDAFKVGRRGSLSGILTVKGVQGHVAYPHLADNPIPRLLKLIGDLTAAPLDHGSDFFPPSNLEVVSVDVGNPVFNLIPAQATARFNVRFNDLFSLESLKSEIIRRLDGAGLTYDLAFQTGASQSFLTAPGPFTDLVASAVEEVTGRRPEPSTSGGTSDARFIKDICPVVEFGLVGRTMHKVDEATPVKDIEALTAIYGRIIARYFSTFA.

A Zn(2+)-binding site is contributed by histidine 66. Aspartate 68 is a catalytic residue. Zn(2+) is bound at residue aspartate 99. Catalysis depends on glutamate 130, which acts as the Proton acceptor. Residues glutamate 131, glutamate 159, and histidine 345 each contribute to the Zn(2+) site.

This sequence belongs to the peptidase M20A family. DapE subfamily. As to quaternary structure, homodimer. Requires Zn(2+) as cofactor. The cofactor is Co(2+).

It carries out the reaction N-succinyl-(2S,6S)-2,6-diaminopimelate + H2O = (2S,6S)-2,6-diaminopimelate + succinate. The protein operates within amino-acid biosynthesis; L-lysine biosynthesis via DAP pathway; LL-2,6-diaminopimelate from (S)-tetrahydrodipicolinate (succinylase route): step 3/3. Catalyzes the hydrolysis of N-succinyl-L,L-diaminopimelic acid (SDAP), forming succinate and LL-2,6-diaminopimelate (DAP), an intermediate involved in the bacterial biosynthesis of lysine and meso-diaminopimelic acid, an essential component of bacterial cell walls. This is Succinyl-diaminopimelate desuccinylase from Xanthobacter autotrophicus (strain ATCC BAA-1158 / Py2).